Reading from the N-terminus, the 461-residue chain is L-seryl-tRNA(Sec) selenium transferase (461 aa).

The residue at position 294 (K294) is an N6-(pyridoxal phosphate)lysine.

Belongs to the SelA family. Pyridoxal 5'-phosphate serves as cofactor.

It localises to the cytoplasm. It catalyses the reaction L-seryl-tRNA(Sec) + selenophosphate + H(+) = L-selenocysteinyl-tRNA(Sec) + phosphate. Its pathway is aminoacyl-tRNA biosynthesis; selenocysteinyl-tRNA(Sec) biosynthesis; selenocysteinyl-tRNA(Sec) from L-seryl-tRNA(Sec) (bacterial route): step 1/1. In terms of biological role, converts seryl-tRNA(Sec) to selenocysteinyl-tRNA(Sec) required for selenoprotein biosynthesis. In Haemophilus influenzae (strain PittEE), this protein is L-seryl-tRNA(Sec) selenium transferase.